A 344-amino-acid chain; its full sequence is MRKLFLDAFGEKKLDKPPVWIMRQAGRYLPEYRAVRAKFDNFMDMCRNADACCEVALHPLQRYDLDAAIVFSDILTIPEAMGMDLKFIKGTGPVFSEPIQSQKDLDKLKSIEDSIGSLDYVYNAVKTTSSAINVPLIGFTGSPWTLAAYMIEGSGSKQFNKLRKMMYANPQLMHSLLQRLADITIIYLLEQVKAGASSVMIFDTWGGILPLEHYKNFSLKYMEYIAKNVKQKINIPIVFFTKGGSNFFEEIKDKSCDGVGVDWSVTLKQARHRIGVGKVLQGNFDPAFLYGSKQSIRETVRANIEFIQSDKLNNYIVNLGHGIYPDIDPDSVRVMIDAIREFSA.

Substrate contacts are provided by residues 23 to 27 (RQAGR), Asp-73, Tyr-149, Thr-204, and His-321.

It belongs to the uroporphyrinogen decarboxylase family. Homodimer.

Its subcellular location is the cytoplasm. The enzyme catalyses uroporphyrinogen III + 4 H(+) = coproporphyrinogen III + 4 CO2. It functions in the pathway porphyrin-containing compound metabolism; protoporphyrin-IX biosynthesis; coproporphyrinogen-III from 5-aminolevulinate: step 4/4. Its function is as follows. Catalyzes the decarboxylation of four acetate groups of uroporphyrinogen-III to yield coproporphyrinogen-III. This chain is Uroporphyrinogen decarboxylase, found in Francisella tularensis subsp. tularensis (strain FSC 198).